Consider the following 517-residue polypeptide: Serine O-succinyltransferase (517 aa).

A mitochondrion-targeting transit peptide spans 1–46 (MSPLNGVARSLPRPFQAVARRPFRVAQPAVACPSNRRSFNHSRSLR). The interval 34–66 (SNRRSFNHSRSLRSTGSQSPAPSPRDSSNPALS) is disordered. Polar residues predominate over residues 45-64 (LRSTGSQSPAPSPRDSSNPA). One can recognise an AB hydrolase-1 domain in the interval 134 to 386 (NVILLHTGLS…LTQQLATKKQ (253 aa)). The important for substrate specificity stretch occupies residues 141 to 144 (GLSA). S238 serves as the catalytic Nucleophile. R307 contributes to the substrate binding site. The disordered stretch occupies residues 413 to 436 (QPYQEQPSASTSAEQSASASETGS). Low complexity predominate over residues 416–436 (QEQPSASTSAEQSASASETGS). Catalysis depends on residues D461 and H498. Position 499 (D499) interacts with substrate.

The protein belongs to the AB hydrolase superfamily. MetX family.

It localises to the mitochondrion. It carries out the reaction succinyl-CoA + L-serine = O-succinyl-L-serine + CoA. The protein operates within amino-acid biosynthesis; L-cysteine biosynthesis; L-cysteine from L-serine: step 1/2. Transfers a succinyl group from succinyl-CoA to L-serine, forming succinyl-L-serine. Also has weak serine acetyl transferase activity and homoserine succinyl transferase activity. The protein is Serine O-succinyltransferase of Emericella nidulans (Aspergillus nidulans).